Here is a 475-residue protein sequence, read N- to C-terminus: PRAME family member 20 (475 aa).

The LRR 1; degenerate repeat unit spans residues 97–124; it reads RWKLQVLDLQDVSENFWMVWSEAMARRC. An LRR 2; degenerate repeat occupies 179 to 203; that stretch reads HLCCKKLKMLGMLFHNIRNILKTVN. Residues 204–230 form an LRR 3; degenerate repeat; sequence LDCIQEVEVNCNWTLPVLAEFTPYLGQ. Residues 231-265 form an LRR 4; degenerate repeat; the sequence is MRNLRKLVLSDIDSRYISPEQKKEFVTQFTTQFLK. LRR repeat units follow at residues 266–291, 292–323, 324–342, 348–375, and 376–400; these read LRCLQKLYMNSVSFLEGHLDQMLSCL, KTSLNILAITNCVLLESDLKHLSKYPSIGQLK, TLDLSGTRLANFSLVPLQV, AATLEYLDLDDCGIVDSQVNAILPALSR, and CFELTTFSFRGNPISTATLENLLCH.

It belongs to the PRAME family.

This is PRAME family member 20 from Homo sapiens (Human).